The sequence spans 305 residues: Acetaldehyde dehydrogenase (305 aa).

13-16 (SGNI) is an NAD(+) binding site. Cys128 (acyl-thioester intermediate) is an active-site residue. NAD(+)-binding positions include 159–167 (SAGPGTRQN) and Asn278.

Belongs to the acetaldehyde dehydrogenase family.

It catalyses the reaction acetaldehyde + NAD(+) + CoA = acetyl-CoA + NADH + H(+). This Roseiflexus castenholzii (strain DSM 13941 / HLO8) protein is Acetaldehyde dehydrogenase.